A 170-amino-acid chain; its full sequence is MKTVIEFYLSGDRVYSEREKAINQLHINRGYGELKGKRLFLSLIEAAYLLEKGWIKVLDGERELSFYDVVSLGKKKDEDFDVKYLVYKDLRDRGYIVKSALKFGSHYRVYRKGAEHSDWLVWVVRESQKLSPNDITARARVAHGVRKTMVLAVVDEDGDVVYYKVEWTKF.

Catalysis depends on residues Tyr110, His116, and Lys147.

Belongs to the tRNA-intron endonuclease family. Archaeal short subfamily. Homotetramer; although the tetramer contains four active sites, only two participate in the cleavage. Therefore, it should be considered as a dimer of dimers.

It carries out the reaction pretRNA = a 3'-half-tRNA molecule with a 5'-OH end + a 5'-half-tRNA molecule with a 2',3'-cyclic phosphate end + an intron with a 2',3'-cyclic phosphate and a 5'-hydroxyl terminus.. Functionally, endonuclease that removes tRNA introns. Cleaves pre-tRNA at the 5'- and 3'-splice sites to release the intron. The products are an intron and two tRNA half-molecules bearing 2',3' cyclic phosphate and 5'-OH termini. Recognizes a pseudosymmetric substrate in which 2 bulged loops of 3 bases are separated by a stem of 4 bp. This Pyrococcus furiosus (strain ATCC 43587 / DSM 3638 / JCM 8422 / Vc1) protein is tRNA-splicing endonuclease.